A 610-amino-acid polypeptide reads, in one-letter code: UvrABC system protein C (610 aa).

The 79-residue stretch at 16–94 (SQPGVYRMYD…IKLYQPRYNV (79 aa)) folds into the GIY-YIG domain. The 36-residue stretch at 204–239 (DQVLTQLIARMEKASQDLAFEEAARIRDQIQAVRRV) folds into the UVR domain.

The protein belongs to the UvrC family. In terms of assembly, interacts with UvrB in an incision complex.

It localises to the cytoplasm. In terms of biological role, the UvrABC repair system catalyzes the recognition and processing of DNA lesions. UvrC both incises the 5' and 3' sides of the lesion. The N-terminal half is responsible for the 3' incision and the C-terminal half is responsible for the 5' incision. This chain is UvrABC system protein C, found in Salmonella enteritidis PT4 (strain P125109).